Here is a 467-residue protein sequence, read N- to C-terminus: Hydroxyacid-oxoacid transhydrogenase, mitochondrial (467 aa).

At Lys-445 the chain carries N6-acetyllysine. The residue at position 452 (Ser-452) is a Phosphoserine.

Belongs to the iron-containing alcohol dehydrogenase family. Hydroxyacid-oxoacid transhydrogenase subfamily.

Its subcellular location is the mitochondrion. It carries out the reaction (S)-3-hydroxybutanoate + 2-oxoglutarate = (R)-2-hydroxyglutarate + acetoacetate. The enzyme catalyses 4-hydroxybutanoate + 2-oxoglutarate = (R)-2-hydroxyglutarate + succinate semialdehyde. Catalyzes the cofactor-independent reversible oxidation of gamma-hydroxybutyrate (GHB) to succinic semialdehyde (SSA) coupled to reduction of 2-ketoglutarate (2-KG) to D-2-hydroxyglutarate (D-2-HG). L-3-hydroxybutyrate (L-3-OHB) is also a substrate for HOT when using 2-KG as hydrogen acceptor, resulting in the formation of D-2-HG. This is Hydroxyacid-oxoacid transhydrogenase, mitochondrial (ADHFE1) from Pongo abelii (Sumatran orangutan).